A 359-amino-acid chain; its full sequence is Peptide chain release factor 1 (359 aa).

Gln235 is subject to N5-methylglutamine.

Belongs to the prokaryotic/mitochondrial release factor family. Methylated by PrmC. Methylation increases the termination efficiency of RF1.

The protein localises to the cytoplasm. In terms of biological role, peptide chain release factor 1 directs the termination of translation in response to the peptide chain termination codons UAG and UAA. The sequence is that of Peptide chain release factor 1 from Nitrosomonas europaea (strain ATCC 19718 / CIP 103999 / KCTC 2705 / NBRC 14298).